Here is a 200-residue protein sequence, read N- to C-terminus: ATP-dependent Clp protease proteolytic subunit (200 aa).

S105 functions as the Nucleophile in the catalytic mechanism. The active site involves H130.

Belongs to the peptidase S14 family. In terms of assembly, fourteen ClpP subunits assemble into 2 heptameric rings which stack back to back to give a disk-like structure with a central cavity, resembling the structure of eukaryotic proteasomes.

The protein localises to the cytoplasm. It catalyses the reaction Hydrolysis of proteins to small peptides in the presence of ATP and magnesium. alpha-casein is the usual test substrate. In the absence of ATP, only oligopeptides shorter than five residues are hydrolyzed (such as succinyl-Leu-Tyr-|-NHMec, and Leu-Tyr-Leu-|-Tyr-Trp, in which cleavage of the -Tyr-|-Leu- and -Tyr-|-Trp bonds also occurs).. Functionally, cleaves peptides in various proteins in a process that requires ATP hydrolysis. Has a chymotrypsin-like activity. Plays a major role in the degradation of misfolded proteins. This chain is ATP-dependent Clp protease proteolytic subunit, found in Hydrogenovibrio crunogenus (strain DSM 25203 / XCL-2) (Thiomicrospira crunogena).